A 521-amino-acid chain; its full sequence is Potassium/proton antiporter CemA (521 aa).

Transmembrane regions (helical) follow at residues 68 to 88, 294 to 314, 399 to 419, 446 to 466, and 481 to 501; these read FVFIIYWSVLECKTSIYLLNI, ALASLQYLGCLILIPWGISFP, ILHLLTDIIYFAIPSASFISG, ILLLTDSCIGFHSPHGWEILI, and IISCFVSTFPVISDTVFKYWI.

Belongs to the CemA family.

It is found in the plastid. The protein localises to the chloroplast inner membrane. The catalysed reaction is K(+)(in) + H(+)(out) = K(+)(out) + H(+)(in). Contributes to K(+)/H(+) antiport activity by supporting proton efflux to control proton extrusion and homeostasis in chloroplasts in a light-dependent manner to modulate photosynthesis. Prevents excessive induction of non-photochemical quenching (NPQ) under continuous-light conditions. Indirectly promotes efficient inorganic carbon uptake into chloroplasts. This Huperzia lucidula (Shining clubmoss) protein is Potassium/proton antiporter CemA.